Consider the following 919-residue polypeptide: Isoleucine--tRNA ligase (919 aa).

Positions P57–T67 match the 'HIGH' region motif. E553 is a binding site for L-isoleucyl-5'-AMP. A 'KMSKS' region motif is present at residues K594–S598. An ATP-binding site is contributed by K597. The Zn(2+) site is built by C887, C890, C907, and C910.

It belongs to the class-I aminoacyl-tRNA synthetase family. IleS type 1 subfamily. In terms of assembly, monomer. The cofactor is Zn(2+).

Its subcellular location is the cytoplasm. It catalyses the reaction tRNA(Ile) + L-isoleucine + ATP = L-isoleucyl-tRNA(Ile) + AMP + diphosphate. In terms of biological role, catalyzes the attachment of isoleucine to tRNA(Ile). As IleRS can inadvertently accommodate and process structurally similar amino acids such as valine, to avoid such errors it has two additional distinct tRNA(Ile)-dependent editing activities. One activity is designated as 'pretransfer' editing and involves the hydrolysis of activated Val-AMP. The other activity is designated 'posttransfer' editing and involves deacylation of mischarged Val-tRNA(Ile). This Thermotoga maritima (strain ATCC 43589 / DSM 3109 / JCM 10099 / NBRC 100826 / MSB8) protein is Isoleucine--tRNA ligase.